A 468-amino-acid polypeptide reads, in one-letter code: Bone morphogenetic protein 3 (468 aa).

An N-terminal signal peptide occupies residues 1 to 22 (MAGARGLLCLWLGYFCLNLAQG). Positions 23–358 (QRPNLHLPGL…EQTLKKARRK (336 aa)) are excised as a propeptide. The segment at 29 to 53 (LPGLRETEPSDRATGGSPSPDLRPH) is disordered. 4 N-linked (GlcNAc...) asparagine glycosylation sites follow: Asn115, Asn139, Asn171, and Asn216. The interval 314-349 (RKPYKSLQTQPPEKSRNKKKQRKGSHQKGQTLQFDE) is disordered. The span at 329-339 (RNKKKQRKGSH) shows a compositional bias: basic residues. The segment covering 340–349 (QKGQTLQFDE) has biased composition (polar residues). Intrachain disulfides connect Cys366/Cys433, Cys395/Cys465, and Cys399/Cys467. An N-linked (GlcNAc...) asparagine glycan is attached at Asn459.

The protein belongs to the TGF-beta family. Homodimer; disulfide-linked.

It localises to the secreted. In terms of biological role, negatively regulates bone density. Antagonizes the ability of certain osteogenic BMPs to induce osteoprogenitor differentiation and ossification. The chain is Bone morphogenetic protein 3 (Bmp3) from Mus musculus (Mouse).